The chain runs to 372 residues: PqqA peptide cyclase (372 aa).

The 217-residue stretch at 4-220 folds into the Radical SAM core domain; it reads APPPLSVLLE…ETARRQLGDR (217 aa). 3 residues coordinate [4Fe-4S] cluster: cysteine 18, cysteine 22, and cysteine 25.

Belongs to the radical SAM superfamily. PqqE family. Interacts with PqqD. The interaction is necessary for activity of PqqE. Requires [4Fe-4S] cluster as cofactor.

The catalysed reaction is [PQQ precursor protein] + S-adenosyl-L-methionine = E-Y cross-linked-[PQQ precursor protein] + 5'-deoxyadenosine + L-methionine + H(+). It participates in cofactor biosynthesis; pyrroloquinoline quinone biosynthesis. Its function is as follows. Catalyzes the cross-linking of a glutamate residue and a tyrosine residue in the PqqA protein as part of the biosynthesis of pyrroloquinoline quinone (PQQ). This Xanthomonas axonopodis pv. citri (strain 306) protein is PqqA peptide cyclase.